A 161-amino-acid polypeptide reads, in one-letter code: 2-C-methyl-D-erythritol 2,4-cyclodiphosphate synthase (161 aa).

Residues aspartate 9 and histidine 11 each coordinate a divalent metal cation. 4-CDP-2-C-methyl-D-erythritol 2-phosphate contacts are provided by residues 9–11 (DFH) and 37–38 (HS). Histidine 45 is a binding site for a divalent metal cation. Residues 59-61 (DIG), 64-68 (FPDTD), 135-138 (TTTE), and arginine 145 contribute to the 4-CDP-2-C-methyl-D-erythritol 2-phosphate site.

Belongs to the IspF family. In terms of assembly, homotrimer. Requires a divalent metal cation as cofactor.

It catalyses the reaction 4-CDP-2-C-methyl-D-erythritol 2-phosphate = 2-C-methyl-D-erythritol 2,4-cyclic diphosphate + CMP. Its pathway is isoprenoid biosynthesis; isopentenyl diphosphate biosynthesis via DXP pathway; isopentenyl diphosphate from 1-deoxy-D-xylulose 5-phosphate: step 4/6. Involved in the biosynthesis of isopentenyl diphosphate (IPP) and dimethylallyl diphosphate (DMAPP), two major building blocks of isoprenoid compounds. Catalyzes the conversion of 4-diphosphocytidyl-2-C-methyl-D-erythritol 2-phosphate (CDP-ME2P) to 2-C-methyl-D-erythritol 2,4-cyclodiphosphate (ME-CPP) with a corresponding release of cytidine 5-monophosphate (CMP). This chain is 2-C-methyl-D-erythritol 2,4-cyclodiphosphate synthase, found in Leptospira borgpetersenii serovar Hardjo-bovis (strain JB197).